Reading from the N-terminus, the 540-residue chain is Sensory neuron membrane protein 1 (540 aa).

The Cytoplasmic segment spans residues 1–105 (MRTDDPVIGN…WIFRPDLSKP (105 aa)). The chain crosses the membrane as a helical span at residues 106-126 (LTGDEMITIPHPLILGALLMV). The Extracellular segment spans residues 127-436 (QRDREAMMPL…YTLFLGLRFN (310 aa)). 2 N-linked (GlcNAc...) asparagine glycosylation sites follow: Asn193 and Asn206. Intrachain disulfides connect Cys245-Cys310, Cys274-Cys330, and Cys312-Cys319. The N-linked (GlcNAc...) asparagine glycan is linked to Asn418. The chain crosses the membrane as a helical span at residues 437–457 (TAVKWLTIIIGTIGTIVGGFM). Topologically, residues 458–540 (HYKRTTKMVN…VTVTEMQERY (83 aa)) are cytoplasmic.

Belongs to the CD36 family.

Its subcellular location is the cell membrane. In terms of biological role, plays an olfactory role that is not restricted to pheromone sensitivity. This is Sensory neuron membrane protein 1 from Aedes aegypti (Yellowfever mosquito).